Reading from the N-terminus, the 403-residue chain is Phosphoglycerate kinase (403 aa).

Residues 22-24, Arg37, 60-63, Arg119, and Arg156 each bind substrate; these read DLN and HLGR. Residues Lys206, Gly302, Glu333, and 359-362 contribute to the ATP site; that span reads GGDS.

This sequence belongs to the phosphoglycerate kinase family. In terms of assembly, monomer.

The protein localises to the cytoplasm. It carries out the reaction (2R)-3-phosphoglycerate + ATP = (2R)-3-phospho-glyceroyl phosphate + ADP. It participates in carbohydrate degradation; glycolysis; pyruvate from D-glyceraldehyde 3-phosphate: step 2/5. This Leifsonia xyli subsp. xyli (strain CTCB07) protein is Phosphoglycerate kinase.